The following is a 313-amino-acid chain: D-alanine--D-alanine ligase (313 aa).

The 201-residue stretch at 108 to 308 folds into the ATP-grasp domain; it reads KLVWQQTGVP…YSELVVKVLS (201 aa). 138 to 193 serves as a coordination point for ATP; that stretch reads VAKLGLPLFVKPASEGSSVAVLKVKTADALPAALAEAATHDKIVIVEKSIEGGGEY. The Mg(2+) site is built by aspartate 262, glutamate 275, and asparagine 277.

The protein belongs to the D-alanine--D-alanine ligase family. Mg(2+) serves as cofactor. It depends on Mn(2+) as a cofactor.

It is found in the cytoplasm. It carries out the reaction 2 D-alanine + ATP = D-alanyl-D-alanine + ADP + phosphate + H(+). Its pathway is cell wall biogenesis; peptidoglycan biosynthesis. Functionally, cell wall formation. The polypeptide is D-alanine--D-alanine ligase (Burkholderia multivorans (strain ATCC 17616 / 249)).